Consider the following 343-residue polypeptide: Heat-inducible transcription repressor HrcA (343 aa).

It belongs to the HrcA family.

Its function is as follows. Negative regulator of class I heat shock genes (grpE-dnaK-dnaJ and groELS operons). Prevents heat-shock induction of these operons. The polypeptide is Heat-inducible transcription repressor HrcA (Clostridium botulinum (strain Alaska E43 / Type E3)).